The following is a 411-amino-acid chain: LL-diaminopimelate aminotransferase (411 aa).

2 residues coordinate substrate: Y15 and G42. Residues Y72, 108 to 109 (SK), Y132, N187, Y218, and 246 to 248 (SFS) contribute to the pyridoxal 5'-phosphate site. Substrate contacts are provided by K109, Y132, and N187. K249 carries the post-translational modification N6-(pyridoxal phosphate)lysine. Positions 257 and 292 each coordinate pyridoxal 5'-phosphate. Residues N292 and R388 each contribute to the substrate site.

Belongs to the class-I pyridoxal-phosphate-dependent aminotransferase family. LL-diaminopimelate aminotransferase subfamily. As to quaternary structure, homodimer. Pyridoxal 5'-phosphate is required as a cofactor.

It carries out the reaction (2S,6S)-2,6-diaminopimelate + 2-oxoglutarate = (S)-2,3,4,5-tetrahydrodipicolinate + L-glutamate + H2O + H(+). The protein operates within amino-acid biosynthesis; L-lysine biosynthesis via DAP pathway; LL-2,6-diaminopimelate from (S)-tetrahydrodipicolinate (aminotransferase route): step 1/1. Its function is as follows. Involved in the synthesis of meso-diaminopimelate (m-DAP or DL-DAP), required for both lysine and peptidoglycan biosynthesis. Catalyzes the direct conversion of tetrahydrodipicolinate to LL-diaminopimelate. This is LL-diaminopimelate aminotransferase from Gloeothece citriformis (strain PCC 7424) (Cyanothece sp. (strain PCC 7424)).